The following is a 604-amino-acid chain: ATP-dependent RNA helicase DBP1 (604 aa).

Positions 1-79 (MSDGSGRYVP…RASGSGGFGG (79 aa)) are disordered. Over residues 32-45 (SRYSGNGFFSSPNR) the composition is skewed to polar residues. Positions 138-166 (TEFKSPPLDELLLENVELANFSKPTPVQK) match the Q motif motif. Residues 169–358 (IPIVTKNRDL…RDFLKDYIFL (190 aa)) enclose the Helicase ATP-binding domain. Position 182–189 (182–189 (AQTGSGKT)) interacts with ATP. A DEAD box motif is present at residues 302 to 305 (DEAD). A Helicase C-terminal domain is found at 386–529 (LLDILINEID…EVPQFLVNMV (144 aa)). Positions 535-591 (FGRGGRNSRTGSNRGRGSNTRDYRHSNKDDWGSLGSSRRGFRSNDNRGFGNNWGSSS) are disordered. Over residues 541-552 (NSRTGSNRGRGS) the composition is skewed to low complexity. Residues 553-565 (NTRDYRHSNKDDW) are compositionally biased toward basic and acidic residues.

It belongs to the DEAD box helicase family. DDX3/DED1 subfamily.

The protein resides in the cytoplasm. It carries out the reaction ATP + H2O = ADP + phosphate + H(+). In terms of biological role, ATP-binding RNA helicase involved in translation initiation. Remodels RNA in response to ADP and ATP concentrations by facilitating disruption, but also formation of RNA duplexes. Redundant to DED1, may be required in conditions in which DED1 expression is decreased. This Candida glabrata (strain ATCC 2001 / BCRC 20586 / JCM 3761 / NBRC 0622 / NRRL Y-65 / CBS 138) (Yeast) protein is ATP-dependent RNA helicase DBP1 (DBP1).